The primary structure comprises 73 residues: uncharacterized protein (73 aa).

This is an uncharacterized protein from Autographa californica nuclear polyhedrosis virus (AcMNPV).